Consider the following 876-residue polypeptide: MAP7 domain-containing protein 3 (876 aa).

Met-1 is modified (N-acetylmethionine). A coiled-coil region spans residues 65–144 (NDIKQRLARE…DEAQKEKFTA (80 aa)). Disordered stretches follow at residues 72–137 (ARER…KDEA) and 170–246 (AMAN…KPRV). Over residues 171 to 183 (MANSESKTANKRS) the composition is skewed to polar residues. Position 185 is a phosphoserine (Ser-185). Positions 191-211 (QGTSALIRQMPLSSAGLQNSV) are enriched in polar residues. Residues 214 to 244 (RKTDKERSSSLNRRDSNLHSSTDKEQAERKP) show a composition bias toward basic and acidic residues. Ser-322 bears the Phosphoserine mark. The segment at 407 to 475 (EAAPEGSLEA…ARDAPKKSEM (69 aa)) is disordered. The span at 425-438 (APKESVKGSPKESM) shows a compositional bias: basic and acidic residues. Residues Ser-441, Ser-457, and Ser-461 each carry the phosphoserine modification. The segment covering 465–475 (KARDAPKKSEM) has biased composition (basic and acidic residues). Ser-490 carries the phosphoserine modification. Disordered stretches follow at residues 509 to 533 (SPIS…SKQS), 613 to 697 (QREK…KKEH), and 723 to 754 (RKTD…SDKD). Residues 510–521 (PISTNRQIQKNC) show a composition bias toward polar residues. Ser-524 carries the phosphoserine modification. Coiled-coil stretches lie at residues 558–640 (VKKK…MAKE) and 689–724 (EADK…RTRK). Composition is skewed to basic and acidic residues over residues 613–639 (QREK…DMAK) and 680–697 (GDAK…KKEH). The segment covering 742–752 (EEAEADNEESD) has biased composition (acidic residues). Phosphoserine occurs at positions 770 and 817. The tract at residues 802–876 (PKTYFNGDLK…LPKSSDTFRQ (75 aa)) is disordered. Residues 820–830 (DTSIQEVVSRP) show a composition bias toward polar residues. Residues 831–842 (SSKRMTSHTTKT) are compositionally biased toward basic residues. Ser-832 carries the post-translational modification Phosphoserine. The segment covering 848–860 (TNTTSRSSAQTKS) has biased composition (polar residues). Basic and acidic residues predominate over residues 861 to 876 (EGFHDILPKSSDTFRQ).

It belongs to the MAP7 family. In terms of assembly, interacts (via N-terminus coiled coil domains) with tubulin and microtubules.

The protein localises to the cytoplasm. It localises to the cytoskeleton. It is found in the spindle. Functionally, promotes the assembly and stability of microtubules. The chain is MAP7 domain-containing protein 3 (MAP7D3) from Homo sapiens (Human).